The primary structure comprises 580 residues: MAAEDIAQLADCLAKANVGDGELSFKGKTLKLNTAQDAEEVIREIEEYEGLQALRLEGNTVGVEAAKAIAEVLQRKPDLKRCHWSDMFTGRLRPEIPTALRSLGDALITAGAQLTELDLSDNAFGPDGVRGFEALLKSPTCFTLQELKLNNCGMGIGGGKILAAALTECHKKSSAHGKPLALKVFIAGRNRLENDGATALSEAFRLIGTLEEVHMPQNGINHAGITALAESFKANSLLKVINLNDNTFTEKGGVAMAEALKTLRQVEVINFGDCLVRSKGAQAIASALKEGLHKLKDLNLSYCEIKADAAVSLAESVEDKSDLEKLDLNGNCLGEEGCEQVQEILESINMANILGSLSDDEDEDDDDDDEDDDDDEDDENDDEEVEEEEEEVEEEEGGDNENKEKSKEIPCLSGSAPASPPKLPVDASTFLSFPSPEKLVRMGPRRSAMIAQQVNVADTEKVVQAFIQVSSVYREDGEIKAAVEETIDGLMKEAFENRGFQANVFITSLLVQMGLLKSEDKMKTIPHLNGPLLTLNHMVQQNYFPKSLASTLLAFISKPNGVLENNASARHTLLCNLHNL.

LRR repeat units lie at residues 48–71 (YEGLQALRLEGNTVGVEAAKAIAE), 111–134 (GAQLTELDLSDNAFGPDGVRGFEA), 141–168 (CFTLQELKLNNCGMGIGGGKILAAALTE), 207–230 (IGTLEEVHMPQNGINHAGITALAE), 235–258 (NSLLKVINLNDNTFTEKGGVAMAE), 292–315 (LHKLKDLNLSYCEIKADAAVSLAE), and 320–343 (KSDLEKLDLNGNCLGEEGCEQVQE). The tract at residues 356–429 (SLSDDEDEDD…PPKLPVDAST (74 aa)) is disordered. Acidic residues predominate over residues 358–399 (SDDEDEDDDDDDEDDDDDEDDENDDEEVEEEEEEVEEEEGGD).

This sequence belongs to the RNA1 family. Homodimer. Identified in a complex with RANBP2 and the ubiquitin-conjugating enzyme E2 (UBE2I). Post-translationally, may be sumoylated.

It is found in the cytoplasm. The protein localises to the nucleus. It localises to the nucleoplasm. The protein resides in the nucleus envelope. Its subcellular location is the chromosome. It is found in the centromere. The protein localises to the kinetochore. It localises to the cytoskeleton. The protein resides in the spindle. Functionally, GTPase activator for RAN, converting it to the GDP-bound state. Converts cytoplasmic GTP-bound RAN to GDP-bound RAN, which is required for RAN-mediated nuclear import and export. The chain is Ran GTPase-activating protein 1 (rangap1) from Xenopus laevis (African clawed frog).